The sequence spans 277 residues: Large ribosomal subunit protein uL2 (277 aa).

Disordered regions lie at residues 37 to 60 (KNST…GHKH) and 223 to 265 (VVMN…KRTD). A compositionally biased stretch (polar residues) spans 39–49 (STAGRNNNGHI). The segment covering 50–60 (TTRHKGGGHKH) has biased composition (basic residues). A compositionally biased stretch (basic and acidic residues) spans 229 to 244 (DHPHGGGEGRTGEARE).

Belongs to the universal ribosomal protein uL2 family. In terms of assembly, part of the 50S ribosomal subunit. Forms a bridge to the 30S subunit in the 70S ribosome.

Its function is as follows. One of the primary rRNA binding proteins. Required for association of the 30S and 50S subunits to form the 70S ribosome, for tRNA binding and peptide bond formation. It has been suggested to have peptidyltransferase activity; this is somewhat controversial. Makes several contacts with the 16S rRNA in the 70S ribosome. The polypeptide is Large ribosomal subunit protein uL2 (Neisseria meningitidis serogroup A / serotype 4A (strain DSM 15465 / Z2491)).